Here is a 185-residue protein sequence, read N- to C-terminus: Imidazoleglycerol-phosphate dehydratase (185 aa).

Belongs to the imidazoleglycerol-phosphate dehydratase family.

It is found in the cytoplasm. The catalysed reaction is D-erythro-1-(imidazol-4-yl)glycerol 3-phosphate = 3-(imidazol-4-yl)-2-oxopropyl phosphate + H2O. It functions in the pathway amino-acid biosynthesis; L-histidine biosynthesis; L-histidine from 5-phospho-alpha-D-ribose 1-diphosphate: step 6/9. The polypeptide is Imidazoleglycerol-phosphate dehydratase (Pyrobaculum arsenaticum (strain DSM 13514 / JCM 11321 / PZ6)).